The sequence spans 236 residues: Apoptosis regulator Bcl-2 (236 aa).

The short motif at 10–30 (DNREIVMKYIHYKLSQRGYEW) is the BH4 element. Phosphothreonine; by MAPK8 is present on Thr69. Ser70 bears the Phosphoserine; by MAPK8 and PKC mark. The residue at position 84 (Ser84) is a Phosphoserine; by MAPK8. Positions 90–104 (VHLTLRRAGDDFSRR) match the BH3 motif. Positions 133 to 152 (ELFRDGVNWGRIVAFFEFGG) match the BH1 motif. The short motif at 184 to 199 (TWIQDNGGWDAFVELY) is the BH2 element. Residues 209-230 (FSWLSLKTLLSLALVGACITLG) form a helical membrane-spanning segment.

It belongs to the Bcl-2 family. Forms homodimers, and heterodimers with BAX, BAD, BAK and Bcl-X(L). Heterodimerization with BAX requires intact BH1 and BH2 motifs, and is necessary for anti-apoptotic activity. Component of the complex, at least composed of LRPPRC, BECN1 and BCL2; the interactions prevent BECN1 from forming an autophagy-inducing complex with PIK3C3. Interacts with EI24. Also interacts with APAF1, BBC3, BCL2L1, BNIPL, MRPL41 and TP53BP2. Binding to FKBP8 seems to target BCL2 to the mitochondria and probably interferes with the binding of BCL2 to its targets. Interacts with BAG1 in an ATP-dependent manner. Interacts with RAF1 (the 'Ser-338' and 'Ser-339' phosphorylated form). Interacts (via the BH4 domain) with EGLN3; the interaction prevents the formation of the BAX-BCL2 complex and inhibits the anti-apoptotic activity of BCL2. Interacts with G0S2; this interaction also prevents the formation of the anti-apoptotic BAX-BCL2 complex. Interacts with RTL10/BOP. Interacts with the SCF(FBXO10) complex. Interacts (via the loop between motifs BH4 and BH3) with NLRP1 (via LRR repeats), but not with NLRP2, NLRP3, NLRP4, PYCARD, nor MEFV. Interacts with GIMAP3/IAN4, GIMAP4/IAN1 and GIMAP5/IAN5. Interacts with BCAP31. Interacts with IRF3; the interaction is inhibited by Sendai virus infection. Interacts with BECN1; thereby inhibiting autophagy in non-starvation conditions. Interacts with AMBRA1; thereby inhibiting autophagy. Phosphorylation/dephosphorylation on Ser-70 regulates anti-apoptotic activity. Growth factor-stimulated phosphorylation on Ser-70 by PKC is required for the anti-apoptosis activity and occurs during the G2/M phase of the cell cycle. In the absence of growth factors, BCL2 appears to be phosphorylated by other protein kinases such as ERKs and stress-activated kinases. Phosphorylated by MAPK8/JNK1 at Thr-69, Ser-70 and Ser-84, which stimulates starvation-induced autophagy. Dephosphorylated by protein phosphatase 2A (PP2A). In terms of processing, proteolytically cleaved by caspases during apoptosis. The cleaved protein, lacking the BH4 motif, has pro-apoptotic activity, causes the release of cytochrome c into the cytosol promoting further caspase activity. Post-translationally, monoubiquitinated by PRKN, leading to an increase in its stability. Ubiquitinated by SCF(FBXO10), leading to its degradation by the proteasome.

The protein resides in the mitochondrion outer membrane. Its subcellular location is the nucleus membrane. It localises to the endoplasmic reticulum membrane. It is found in the cytoplasm. Suppresses apoptosis in a variety of cell systems including factor-dependent lymphohematopoietic and neural cells. Regulates cell death by controlling the mitochondrial membrane permeability. Appears to function in a feedback loop system with caspases. Inhibits caspase activity either by preventing the release of cytochrome c from the mitochondria and/or by binding to the apoptosis-activating factor (APAF-1). Also acts as an inhibitor of autophagy: interacts with BECN1 and AMBRA1 during non-starvation conditions and inhibits their autophagy function. May attenuate inflammation by impairing NLRP1-inflammasome activation, hence CASP1 activation and IL1B release. The chain is Apoptosis regulator Bcl-2 (BCL2) from Cricetulus griseus (Chinese hamster).